We begin with the raw amino-acid sequence, 274 residues long: Diaminopimelate epimerase (274 aa).

Substrate is bound by residues Asn-11, Gln-44, and Asn-64. Residue Cys-73 is the Proton donor of the active site. Substrate is bound by residues 74-75 (GN), Asn-157, Asn-190, and 208-209 (ER). Residue Cys-217 is the Proton acceptor of the active site. Residue 218 to 219 (GS) coordinates substrate.

This sequence belongs to the diaminopimelate epimerase family. As to quaternary structure, homodimer.

Its subcellular location is the cytoplasm. It catalyses the reaction (2S,6S)-2,6-diaminopimelate = meso-2,6-diaminopimelate. The protein operates within amino-acid biosynthesis; L-lysine biosynthesis via DAP pathway; DL-2,6-diaminopimelate from LL-2,6-diaminopimelate: step 1/1. Its function is as follows. Catalyzes the stereoinversion of LL-2,6-diaminopimelate (L,L-DAP) to meso-diaminopimelate (meso-DAP), a precursor of L-lysine and an essential component of the bacterial peptidoglycan. This chain is Diaminopimelate epimerase, found in Sodalis glossinidius (strain morsitans).